The primary structure comprises 1298 residues: Phosphoribosylformylglycinamidine synthase (1298 aa).

The tract at residues 303 to 327 (FPGAATGSGGEIRDEGATGRGAKPK) is disordered. ATP-binding positions include 305–316 (GAATGSGGEIRD), 384–386 (TGY), and Ala-676. Mg(2+) contacts are provided by Asp-677, Glu-716, Asn-720, and Asp-884. Ser-886 provides a ligand contact to ATP. The 254-residue stretch at 1045-1298 (VAVLREQGVN…MFRNARAWVN (254 aa)) folds into the Glutamine amidotransferase type-1 domain. Cys-1138 acts as the Nucleophile in catalysis. Residues His-1263 and Glu-1265 contribute to the active site.

It in the N-terminal section; belongs to the FGAMS family. Monomer.

The protein localises to the cytoplasm. It catalyses the reaction N(2)-formyl-N(1)-(5-phospho-beta-D-ribosyl)glycinamide + L-glutamine + ATP + H2O = 2-formamido-N(1)-(5-O-phospho-beta-D-ribosyl)acetamidine + L-glutamate + ADP + phosphate + H(+). It participates in purine metabolism; IMP biosynthesis via de novo pathway; 5-amino-1-(5-phospho-D-ribosyl)imidazole from N(2)-formyl-N(1)-(5-phospho-D-ribosyl)glycinamide: step 1/2. Its function is as follows. Phosphoribosylformylglycinamidine synthase involved in the purines biosynthetic pathway. Catalyzes the ATP-dependent conversion of formylglycinamide ribonucleotide (FGAR) and glutamine to yield formylglycinamidine ribonucleotide (FGAM) and glutamate. This chain is Phosphoribosylformylglycinamidine synthase, found in Pseudomonas syringae pv. syringae (strain B728a).